The chain runs to 307 residues: Aspartate carbamoyltransferase catalytic subunit (307 aa).

The carbamoyl phosphate site is built by arginine 55 and threonine 56. L-aspartate is bound at residue lysine 85. Residues arginine 106, histidine 135, and glutamine 138 each contribute to the carbamoyl phosphate site. Residues arginine 168 and arginine 230 each contribute to the L-aspartate site. Leucine 268 and proline 269 together coordinate carbamoyl phosphate.

This sequence belongs to the aspartate/ornithine carbamoyltransferase superfamily. ATCase family. Heterododecamer (2C3:3R2) of six catalytic PyrB chains organized as two trimers (C3), and six regulatory PyrI chains organized as three dimers (R2).

It carries out the reaction carbamoyl phosphate + L-aspartate = N-carbamoyl-L-aspartate + phosphate + H(+). It functions in the pathway pyrimidine metabolism; UMP biosynthesis via de novo pathway; (S)-dihydroorotate from bicarbonate: step 2/3. Functionally, catalyzes the condensation of carbamoyl phosphate and aspartate to form carbamoyl aspartate and inorganic phosphate, the committed step in the de novo pyrimidine nucleotide biosynthesis pathway. The protein is Aspartate carbamoyltransferase catalytic subunit of Photorhabdus laumondii subsp. laumondii (strain DSM 15139 / CIP 105565 / TT01) (Photorhabdus luminescens subsp. laumondii).